We begin with the raw amino-acid sequence, 745 residues long: Prolyl oligopeptidase ophP (745 aa).

Active-site charge relay system residues include Ser580, Asp665, and His701.

The protein belongs to the peptidase S9A family. Monomer.

It catalyses the reaction Hydrolysis of Pro-|-Xaa &gt;&gt; Ala-|-Xaa in oligopeptides.. It participates in mycotoxin biosynthesis. In terms of biological role, prolyl oligopeptidase; part of the gene cluster that mediates the biosynthesis of omphalotin A, a highly methylated cyclic dodecapeptide with nematodicidal activity. Excises and catalyzes the macrocyclization of the methylated core peptide of OphMA to yield omphalotin A. OphP works in a two-step fashion with an initial cleavage at the N-terminus, followed by a second cleavage at the C-terminus of the core peptide. According to this mechanism, the free N-terminus of the core peptide, generated by the first cleavage, attacks the covalent intermediate of the second cleavage, which results in macrocyclization of the core peptide. This chain is Prolyl oligopeptidase ophP, found in Omphalotus olearius (Jack o'lantern).